A 180-amino-acid chain; its full sequence is Adenine phosphoribosyltransferase (180 aa).

The protein belongs to the purine/pyrimidine phosphoribosyltransferase family. As to quaternary structure, homodimer.

The protein resides in the cytoplasm. The catalysed reaction is AMP + diphosphate = 5-phospho-alpha-D-ribose 1-diphosphate + adenine. Its pathway is purine metabolism; AMP biosynthesis via salvage pathway; AMP from adenine: step 1/1. Catalyzes a salvage reaction resulting in the formation of AMP, that is energically less costly than de novo synthesis. The polypeptide is Adenine phosphoribosyltransferase (Mycolicibacterium smegmatis (strain ATCC 700084 / mc(2)155) (Mycobacterium smegmatis)).